The sequence spans 297 residues: Phosphatidylserine decarboxylase proenzyme (297 aa).

Catalysis depends on charge relay system; for autoendoproteolytic cleavage activity residues Asp-100, His-157, and Ser-263. The active-site Schiff-base intermediate with substrate; via pyruvic acid; for decarboxylase activity is Ser-263. Ser-263 bears the Pyruvic acid (Ser); by autocatalysis mark.

The protein belongs to the phosphatidylserine decarboxylase family. PSD-B subfamily. Prokaryotic type I sub-subfamily. Heterodimer of a large membrane-associated beta subunit and a small pyruvoyl-containing alpha subunit. Pyruvate is required as a cofactor. Is synthesized initially as an inactive proenzyme. Formation of the active enzyme involves a self-maturation process in which the active site pyruvoyl group is generated from an internal serine residue via an autocatalytic post-translational modification. Two non-identical subunits are generated from the proenzyme in this reaction, and the pyruvate is formed at the N-terminus of the alpha chain, which is derived from the carboxyl end of the proenzyme. The autoendoproteolytic cleavage occurs by a canonical serine protease mechanism, in which the side chain hydroxyl group of the serine supplies its oxygen atom to form the C-terminus of the beta chain, while the remainder of the serine residue undergoes an oxidative deamination to produce ammonia and the pyruvoyl prosthetic group on the alpha chain. During this reaction, the Ser that is part of the protease active site of the proenzyme becomes the pyruvoyl prosthetic group, which constitutes an essential element of the active site of the mature decarboxylase.

It is found in the cell membrane. It carries out the reaction a 1,2-diacyl-sn-glycero-3-phospho-L-serine + H(+) = a 1,2-diacyl-sn-glycero-3-phosphoethanolamine + CO2. Its pathway is phospholipid metabolism; phosphatidylethanolamine biosynthesis; phosphatidylethanolamine from CDP-diacylglycerol: step 2/2. Functionally, catalyzes the formation of phosphatidylethanolamine (PtdEtn) from phosphatidylserine (PtdSer). The chain is Phosphatidylserine decarboxylase proenzyme from Actinobacillus pleuropneumoniae serotype 5b (strain L20).